Here is a 257-residue protein sequence, read N- to C-terminus: 3-methyl-2-oxobutanoate hydroxymethyltransferase (257 aa).

Mg(2+) contacts are provided by D42 and D86. Residues 42–43 (DS), D86, and K116 each bind 3-methyl-2-oxobutanoate. Residue E118 participates in Mg(2+) binding. The active-site Proton acceptor is E185.

Belongs to the PanB family. As to quaternary structure, homodecamer; pentamer of dimers. Mg(2+) is required as a cofactor.

Its subcellular location is the cytoplasm. It catalyses the reaction 3-methyl-2-oxobutanoate + (6R)-5,10-methylene-5,6,7,8-tetrahydrofolate + H2O = 2-dehydropantoate + (6S)-5,6,7,8-tetrahydrofolate. The protein operates within cofactor biosynthesis; (R)-pantothenate biosynthesis; (R)-pantoate from 3-methyl-2-oxobutanoate: step 1/2. In terms of biological role, catalyzes the reversible reaction in which hydroxymethyl group from 5,10-methylenetetrahydrofolate is transferred onto alpha-ketoisovalerate to form ketopantoate. The protein is 3-methyl-2-oxobutanoate hydroxymethyltransferase of Prochlorococcus marinus (strain MIT 9312).